Reading from the N-terminus, the 187-residue chain is Ribosome maturation factor RimM (187 aa).

One can recognise a PRC barrel domain in the interval 111–187 (KDEYYWVDLI…RILVDWQADF (77 aa)).

The protein belongs to the RimM family. Binds ribosomal protein uS19.

It localises to the cytoplasm. In terms of biological role, an accessory protein needed during the final step in the assembly of 30S ribosomal subunit, possibly for assembly of the head region. Essential for efficient processing of 16S rRNA. May be needed both before and after RbfA during the maturation of 16S rRNA. It has affinity for free ribosomal 30S subunits but not for 70S ribosomes. The chain is Ribosome maturation factor RimM from Albidiferax ferrireducens (strain ATCC BAA-621 / DSM 15236 / T118) (Rhodoferax ferrireducens).